The sequence spans 178 residues: C-phycoerythrin class 2 subunit beta (178 aa).

Residues Cys50 and Cys61 each contribute to the phycourobilin site. Cys82 and Cys159 together coordinate (2R,3E)-phycoerythrobilin.

Belongs to the phycobiliprotein family. In terms of assembly, heterodimer of an alpha and a beta chain. Post-translationally, contains two covalently linked phycoerythrobilin chromophores and one covalently linked phycourobilin chromophore.

It localises to the cellular thylakoid membrane. Its function is as follows. Light-harvesting photosynthetic bile pigment-protein from the phycobiliprotein complex. In Synechococcus sp. (strain WH8020), this protein is C-phycoerythrin class 2 subunit beta (mpeB).